The primary structure comprises 188 residues: Elongation factor P (188 aa).

It belongs to the elongation factor P family.

The protein localises to the cytoplasm. The protein operates within protein biosynthesis; polypeptide chain elongation. In terms of biological role, involved in peptide bond synthesis. Stimulates efficient translation and peptide-bond synthesis on native or reconstituted 70S ribosomes in vitro. Probably functions indirectly by altering the affinity of the ribosome for aminoacyl-tRNA, thus increasing their reactivity as acceptors for peptidyl transferase. The protein is Elongation factor P of Leptospira borgpetersenii serovar Hardjo-bovis (strain JB197).